The following is a 320-amino-acid chain: ADP-L-glycero-D-manno-heptose-6-epimerase (320 aa).

Residues 10-11, 31-32, K38, K53, 75-79, and N92 each bind NADP(+); these read FI, DN, and LGACS. The Proton acceptor role is filled by Y139. Position 143 (K143) interacts with NADP(+). Residue N168 participates in substrate binding. 2 residues coordinate NADP(+): V169 and K177. K177 functions as the Proton acceptor in the catalytic mechanism. Substrate is bound by residues G179, H186, 200–203, R213, and Y277; that span reads FEGS.

Belongs to the NAD(P)-dependent epimerase/dehydratase family. HldD subfamily. In terms of assembly, homopentamer. It depends on NADP(+) as a cofactor.

The catalysed reaction is ADP-D-glycero-beta-D-manno-heptose = ADP-L-glycero-beta-D-manno-heptose. The protein operates within nucleotide-sugar biosynthesis; ADP-L-glycero-beta-D-manno-heptose biosynthesis; ADP-L-glycero-beta-D-manno-heptose from D-glycero-beta-D-manno-heptose 7-phosphate: step 4/4. In terms of biological role, catalyzes the interconversion between ADP-D-glycero-beta-D-manno-heptose and ADP-L-glycero-beta-D-manno-heptose via an epimerization at carbon 6 of the heptose. In Alkalilimnicola ehrlichii (strain ATCC BAA-1101 / DSM 17681 / MLHE-1), this protein is ADP-L-glycero-D-manno-heptose-6-epimerase.